A 1475-amino-acid chain; its full sequence is Amylopullulanase (1475 aa).

Positions 1 to 31 are cleaved as a signal peptide; the sequence is MFKRRALGFLLAFLLVFTAVFGSMPMEFAKA. Ca(2+) contacts are provided by D245, N247, D285, D340, N398, D400, N403, D404, G449, and D451. Residues H524 and R627 each coordinate substrate. The Nucleophile role is filled by D629. E658 serves as the catalytic Proton donor. Substrate is bound by residues 734-735, D794, and R798; that span reads HD. 2 consecutive Fibronectin type-III domains span residues 928–1019 and 1164–1257; these read APQP…PAFP and TPTA…TPDI. Positions 1255-1362 constitute a CBM20 domain; sequence PDIIPIKVTF…VNDTVQRWRD (108 aa).

The protein belongs to the glycosyl hydrolase 13 family. Ca(2+) serves as cofactor.

The catalysed reaction is Endohydrolysis of (1-&gt;4)-alpha-D-glucosidic linkages in polysaccharides containing three or more (1-&gt;4)-alpha-linked D-glucose units.. It catalyses the reaction Hydrolysis of (1-&gt;6)-alpha-D-glucosidic linkages in pullulan, amylopectin and glycogen, and in the alpha- and beta-limit dextrins of amylopectin and glycogen.. This is Amylopullulanase (apu) from Thermoanaerobacter thermohydrosulfuricus (Clostridium thermohydrosulfuricum).